Reading from the N-terminus, the 661-residue chain is Junctophilin-1 (661 aa).

At 1 to 639 the chain is on the cytoplasmic side; that stretch reads MTGGRFDFDD…EKEANSGPNS (639 aa). MORN repeat units follow at residues 14–36, 38–59, 60–82, 106–128, and 129–151; these read YCGG…KGQG, YSGS…SGNT, YQGY…KWMY, YEGT…DGGT, and YQGQ…PYGM. A phosphoserine mark is found at serine 157, serine 216, and serine 220. Residues 228-247 form a disordered region; the sequence is SKSSISSKRSSVRSDAAMSR. 2 MORN repeats span residues 281 to 303 and 304 to 326; these read YMGE…NGMK and YEGE…DGSK. Positions 433 to 454 are enriched in basic and acidic residues; it reads DAKENPEEKVPEKPPTPKESPH. A disordered region spans residues 433–631; sequence DAKENPEEKV…SNDSCPALEK (199 aa). Threonine 448 is modified (phosphothreonine). Serine 452 is subject to Phosphoserine. Threonine 461 carries the post-translational modification Phosphothreonine. A phosphoserine mark is found at serine 465, serine 469, and serine 475. Over residues 599-613 the composition is skewed to basic and acidic residues; it reads VAKESKAEPKAKKSE. A helical; Anchor for type IV membrane protein transmembrane segment spans residues 640-660; the sequence is IMIVLVMLLNIGLAILFVHFL.

It belongs to the junctophilin family. Abundantly expressed in skeletal muscle. Very low levels in heart.

The protein resides in the cell membrane. Its subcellular location is the endoplasmic reticulum membrane. It is found in the sarcoplasmic reticulum membrane. Functionally, junctophilins contribute to the formation of junctional membrane complexes (JMCs) which link the plasma membrane with the endoplasmic or sarcoplasmic reticulum in excitable cells. Provides a structural foundation for functional cross-talk between the cell surface and intracellular calcium release channels. JPH1 contributes to the construction of the skeletal muscle triad by linking the t-tubule (transverse-tubule) and SR (sarcoplasmic reticulum) membranes. This chain is Junctophilin-1 (JPH1), found in Homo sapiens (Human).